A 633-amino-acid polypeptide reads, in one-letter code: Probable sodium/potassium/calcium exchanger CG1090 (633 aa).

An N-terminal signal peptide occupies residues 1 to 21; it reads MWNMGLLFLIYYCVSIYSAKG. The Extracellular portion of the chain corresponds to 22–111; the sequence is DTKDGQVLPL…PLMNKWARQH (90 aa). A helical membrane pass occupies residues 112–132; it reads GGLILHILVAVFTFFGLAIVC. Residues 133–157 are Cytoplasmic-facing; it reads DEYFVASLDRLCEELKLSPDVAGAT. One copy of the Alpha-1 repeat lies at 153-193; sequence VAGATFMAAGSSAPELATVVIGVFFAKDDIGISGVIGSAVF. Residues 158–178 traverse the membrane as a helical segment; the sequence is FMAAGSSAPELATVVIGVFFA. Topologically, residues 179 to 181 are extracellular; that stretch reads KDD. The helical transmembrane segment at 182 to 202 threads the bilayer; that stretch reads IGISGVIGSAVFNIMFVISVC. Over 203–220 the chain is Cytoplasmic; that stretch reads ALCSGTVCQLNWWPLVRD. Helical transmembrane passes span 221-241 and 242-262; these read CFFY…DVIS and CFES…LHFN. The Extracellular segment spans residues 263–427; it reads TELERWALGL…EPRRDPLLRP (165 aa). Polar residues-rich tracts occupy residues 298–310, 320–333, and 395–405; these read YTQE…QGQK, AKPQ…SDPN, and QVVSTQATSAG. Positions 298-422 are disordered; it reads YTQESVGQTQ…TDKQREPRRD (125 aa). A compositionally biased stretch (basic and acidic residues) spans 411 to 422; sequence KSTDKQREPRRD. A helical membrane pass occupies residues 428–448; the sequence is MEGGLPALVSWYVVYPIHFLC. Topologically, residues 449–468 are cytoplasmic; sequence KKTMPDCRQEQYRNWYPFTF. A helical membrane pass occupies residues 469–489; sequence LMSMVWISFYSYFMVWMITVI. Topologically, residues 490–500 are extracellular; the sequence is GSTLAIPDTVM. The helical transmembrane segment at 501–521 threads the bilayer; that stretch reads GLTFVAAGVSVPDALSSIAVI. Residues 506–537 form an Alpha-2 repeat; that stretch reads AAGVSVPDALSSIAVIKEGFGDMAVSNAIGSN. Residues 522–535 lie on the Cytoplasmic side of the membrane; that stretch reads KEGFGDMAVSNAIG. A helical transmembrane segment spans residues 536-556; that stretch reads SNVFDILVCLGLPWFIQTAII. Topologically, residues 557–568 are extracellular; that stretch reads KPGSHVNVISKG. The helical transmembrane segment at 569–589 threads the bilayer; the sequence is LAYSTLSLFSTVVFLILSTHL. Topologically, residues 590–597 are cytoplasmic; that stretch reads NGWKLDKR. The chain crosses the membrane as a helical span at residues 598 to 618; sequence LGIILMVWYLFFITLASLYEL. Residues 619–633 lie on the Extracellular side of the membrane; sequence NVFGYMNPPECPSTY.

The protein belongs to the Ca(2+):cation antiporter (CaCA) (TC 2.A.19) family. SLC24A subfamily.

It is found in the membrane. Its function is as follows. May function in the removal and maintenance of calcium homeostasis. Transports one Ca(2+) and 1 K(+) in exchange for 4 Na(+). The sequence is that of Probable sodium/potassium/calcium exchanger CG1090 from Drosophila melanogaster (Fruit fly).